The sequence spans 425 residues: Histone-binding protein RBBP7 (425 aa).

WD repeat units lie at residues 47–122, 128–173, 181–217, 228–269, 275–312, 318–369, and 376–403; these read QWLP…KINH, RARY…LRLR, GLSW…KVVD, VVED…HSVD, VNCL…LHSF, EIFQ…LFIH, and ISDF…IWQM.

It belongs to the WD repeat RBAP46/RBAP48/MSI1 family. In terms of assembly, binds directly to helix 1 of the histone fold of histone H4, a region that is not accessible when H4 is in chromatin.

It is found in the nucleus. Its function is as follows. Core histone-binding subunit that may target chromatin remodeling factors, histone acetyltransferases and histone deacetylases to their histone substrates in a manner that is regulated by nucleosomal DNA. Component of several complexes which regulate chromatin metabolism. The sequence is that of Histone-binding protein RBBP7 (rbbp7) from Xenopus laevis (African clawed frog).